Consider the following 207-residue polypeptide: Small ribosomal subunit protein uS4c (207 aa).

Residues 92 to 153 form the S4 RNA-binding domain; sequence MRLDNILFRL…PKTYQSILSK (62 aa).

Belongs to the universal ribosomal protein uS4 family. Part of the 30S ribosomal subunit. Contacts protein S5. The interaction surface between S4 and S5 is involved in control of translational fidelity.

It localises to the plastid. Its subcellular location is the chloroplast. One of the primary rRNA binding proteins, it binds directly to 16S rRNA where it nucleates assembly of the body of the 30S subunit. Functionally, with S5 and S12 plays an important role in translational accuracy. The chain is Small ribosomal subunit protein uS4c (rps4) from Equisetum laevigatum (Smooth horsetail).